Reading from the N-terminus, the 1399-residue chain is DNA-directed RNA polymerase subunit beta' (1399 aa).

Cysteine 70, cysteine 72, cysteine 85, and cysteine 88 together coordinate Zn(2+). Mg(2+) is bound by residues aspartate 460, aspartate 462, and aspartate 464. Residues cysteine 814, cysteine 888, cysteine 895, and cysteine 898 each contribute to the Zn(2+) site. The segment at 1367-1399 is disordered; the sequence is SERKRQRDLGKPQRVSASEAEAALTEALNSSGN. Over residues 1382 to 1399 the composition is skewed to low complexity; sequence SASEAEAALTEALNSSGN.

The protein belongs to the RNA polymerase beta' chain family. The RNAP catalytic core consists of 2 alpha, 1 beta, 1 beta' and 1 omega subunit. When a sigma factor is associated with the core the holoenzyme is formed, which can initiate transcription. It depends on Mg(2+) as a cofactor. Zn(2+) serves as cofactor.

The enzyme catalyses RNA(n) + a ribonucleoside 5'-triphosphate = RNA(n+1) + diphosphate. Its function is as follows. DNA-dependent RNA polymerase catalyzes the transcription of DNA into RNA using the four ribonucleoside triphosphates as substrates. This chain is DNA-directed RNA polymerase subunit beta', found in Pseudomonas paraeruginosa (strain DSM 24068 / PA7) (Pseudomonas aeruginosa (strain PA7)).